A 296-amino-acid polypeptide reads, in one-letter code: mRNA 3'-end-processing protein RNA15 (296 aa).

The RRM domain maps to 18–96 (RVVYLGSIPY…RFLKCGYSSN (79 aa)). Positions 99 to 140 (ISGVSQQQQQQYNNINGNNNNNGNNNNNSNGPDFQNSGNANF) are disordered. A compositionally biased stretch (low complexity) spans 100–135 (SGVSQQQQQQYNNINGNNNNNGNNNNNSNGPDFQNS).

In terms of assembly, component of the CFIA complex, which is composed of RNA14, RNA15, PCF11 and CLP1. Interacts directly with RNA14. Interacts with polyadenylate-binding protein PAB1.

The protein localises to the nucleus. RNA-binding component of the cleavage factor IA (CFIA) complex, which is involved in the endonucleolytic cleavage during polyadenylation-dependent pre-mRNA 3'-end formation and cooperates with the cleavage factor NAB4/CFIB and the cleavage and polyadenylation factor (CPF) complex. Binds to A-rich RNA sequence elements. The protein is mRNA 3'-end-processing protein RNA15 (RNA15) of Saccharomyces cerevisiae (strain ATCC 204508 / S288c) (Baker's yeast).